Consider the following 613-residue polypeptide: Probable Xaa-Pro aminopeptidase P (613 aa).

Positions 408, 419, 517, and 531 each coordinate Mn(2+).

The protein belongs to the peptidase M24B family. The cofactor is Mn(2+).

It carries out the reaction Release of any N-terminal amino acid, including proline, that is linked to proline, even from a dipeptide or tripeptide.. Catalyzes the removal of a penultimate prolyl residue from the N-termini of peptides. The sequence is that of Probable Xaa-Pro aminopeptidase P (ampp) from Penicillium rubens (strain ATCC 28089 / DSM 1075 / NRRL 1951 / Wisconsin 54-1255) (Penicillium chrysogenum).